The following is a 117-amino-acid chain: Fluoride-specific ion channel FluC 1 (117 aa).

4 helical membrane-spanning segments follow: residues 1–21 (MIHI…RAWL), 35–55 (IATL…YGIA), 60–80 (LFSL…STLS), and 97–117 (FSYS…GYSI). Na(+) is bound by residues G71 and T74.

It belongs to the fluoride channel Fluc/FEX (TC 1.A.43) family.

It is found in the cell membrane. It catalyses the reaction fluoride(in) = fluoride(out). Na(+) is not transported, but it plays an essential structural role and its presence is essential for fluoride channel function. Functionally, fluoride-specific ion channel. Important for reducing fluoride concentration in the cell, thus reducing its toxicity. This is Fluoride-specific ion channel FluC 1 from Staphylococcus haemolyticus (strain JCSC1435).